The sequence spans 103 residues: Small ribosomal subunit protein uS10 (103 aa).

It belongs to the universal ribosomal protein uS10 family. In terms of assembly, part of the 30S ribosomal subunit.

In terms of biological role, involved in the binding of tRNA to the ribosomes. The protein is Small ribosomal subunit protein uS10 of Pectobacterium atrosepticum (strain SCRI 1043 / ATCC BAA-672) (Erwinia carotovora subsp. atroseptica).